Here is a 120-residue protein sequence, read N- to C-terminus: Prefoldin subunit beta (120 aa).

This sequence belongs to the prefoldin subunit beta family. Heterohexamer of two alpha and four beta subunits.

Its subcellular location is the cytoplasm. Its function is as follows. Molecular chaperone capable of stabilizing a range of proteins. Seems to fulfill an ATP-independent, HSP70-like function in archaeal de novo protein folding. The chain is Prefoldin subunit beta from Methanospirillum hungatei JF-1 (strain ATCC 27890 / DSM 864 / NBRC 100397 / JF-1).